We begin with the raw amino-acid sequence, 293 residues long: Small ribosomal subunit biogenesis GTPase RsgA (293 aa).

The region spanning 63 to 223 (QNELVRPPIA…VADTPGFSAL (161 aa)) is the CP-type G domain. Residues 112 to 115 (SKID) and 166 to 174 (GQSGVGKSS) contribute to the GTP site. Residues Cys-247, Cys-252, His-254, and Cys-260 each contribute to the Zn(2+) site.

It belongs to the TRAFAC class YlqF/YawG GTPase family. RsgA subfamily. In terms of assembly, monomer. Associates with 30S ribosomal subunit, binds 16S rRNA. Zn(2+) is required as a cofactor.

It is found in the cytoplasm. Its function is as follows. One of several proteins that assist in the late maturation steps of the functional core of the 30S ribosomal subunit. Helps release RbfA from mature subunits. May play a role in the assembly of ribosomal proteins into the subunit. Circularly permuted GTPase that catalyzes slow GTP hydrolysis, GTPase activity is stimulated by the 30S ribosomal subunit. This chain is Small ribosomal subunit biogenesis GTPase RsgA, found in Geobacillus kaustophilus (strain HTA426).